Here is a 337-residue protein sequence, read N- to C-terminus: MDDLKSIIGKVATGASLSRDEAASAFDAMMSGEATPSQMGGLLMALRVRGETVDEITGAVAAMRSKMLTVTAPPDAVDIVGTGGDGSGSVNVSTCASFIVSGAGVPVAKHGNRALSSRSGAADVLASLGVRIDLRPEQVGRCVRECGIGFMFAPAHHPAMKNVGPTRVELATRTIFNLLGPLSNPAGVKRQMVGVFSRQWVQPLAQVLKNLGSESAWVVHGSDGLDEITLTGPTFVSSLHNGEIRNFEVTPEEAGLPRCEPGALKGGDADANAIALQSVLNGKPSAYRDVALMNAAAALVVAGRAKDLKEGVALGAKSLDSGAANARLKHLIAVSNG.

5-phospho-alpha-D-ribose 1-diphosphate contacts are provided by residues glycine 81, 84-85 (GD), serine 89, 91-94 (NVST), 109-117 (KHGNRALSS), and alanine 121. Residue glycine 81 coordinates anthranilate. Mg(2+) is bound at residue serine 93. An anthranilate-binding site is contributed by asparagine 112. Position 167 (arginine 167) interacts with anthranilate. Residues aspartate 226 and glutamate 227 each contribute to the Mg(2+) site.

The protein belongs to the anthranilate phosphoribosyltransferase family. Homodimer. Mg(2+) is required as a cofactor.

The catalysed reaction is N-(5-phospho-beta-D-ribosyl)anthranilate + diphosphate = 5-phospho-alpha-D-ribose 1-diphosphate + anthranilate. It functions in the pathway amino-acid biosynthesis; L-tryptophan biosynthesis; L-tryptophan from chorismate: step 2/5. Functionally, catalyzes the transfer of the phosphoribosyl group of 5-phosphorylribose-1-pyrophosphate (PRPP) to anthranilate to yield N-(5'-phosphoribosyl)-anthranilate (PRA). The sequence is that of Anthranilate phosphoribosyltransferase from Bradyrhizobium diazoefficiens (strain JCM 10833 / BCRC 13528 / IAM 13628 / NBRC 14792 / USDA 110).